Here is a 152-residue protein sequence, read N- to C-terminus: SsrA-binding protein (152 aa).

It belongs to the SmpB family.

The protein localises to the cytoplasm. In terms of biological role, required for rescue of stalled ribosomes mediated by trans-translation. Binds to transfer-messenger RNA (tmRNA), required for stable association of tmRNA with ribosomes. tmRNA and SmpB together mimic tRNA shape, replacing the anticodon stem-loop with SmpB. tmRNA is encoded by the ssrA gene; the 2 termini fold to resemble tRNA(Ala) and it encodes a 'tag peptide', a short internal open reading frame. During trans-translation Ala-aminoacylated tmRNA acts like a tRNA, entering the A-site of stalled ribosomes, displacing the stalled mRNA. The ribosome then switches to translate the ORF on the tmRNA; the nascent peptide is terminated with the 'tag peptide' encoded by the tmRNA and targeted for degradation. The ribosome is freed to recommence translation, which seems to be the essential function of trans-translation. This is SsrA-binding protein from Rickettsia rickettsii.